Reading from the N-terminus, the 291-residue chain is Ribosomal RNA small subunit methyltransferase A (291 aa).

6 residues coordinate S-adenosyl-L-methionine: N28, L30, G55, E77, D103, and N123.

This sequence belongs to the class I-like SAM-binding methyltransferase superfamily. rRNA adenine N(6)-methyltransferase family. RsmA subfamily.

Its subcellular location is the cytoplasm. The catalysed reaction is adenosine(1518)/adenosine(1519) in 16S rRNA + 4 S-adenosyl-L-methionine = N(6)-dimethyladenosine(1518)/N(6)-dimethyladenosine(1519) in 16S rRNA + 4 S-adenosyl-L-homocysteine + 4 H(+). Functionally, specifically dimethylates two adjacent adenosines (A1518 and A1519) in the loop of a conserved hairpin near the 3'-end of 16S rRNA in the 30S particle. May play a critical role in biogenesis of 30S subunits. The chain is Ribosomal RNA small subunit methyltransferase A from Azorhizobium caulinodans (strain ATCC 43989 / DSM 5975 / JCM 20966 / LMG 6465 / NBRC 14845 / NCIMB 13405 / ORS 571).